The primary structure comprises 136 residues: Protein NrdI (136 aa).

The protein belongs to the NrdI family.

Its function is as follows. Probably involved in ribonucleotide reductase function. The sequence is that of Protein NrdI from Salmonella paratyphi B (strain ATCC BAA-1250 / SPB7).